The chain runs to 388 residues: Succinate--CoA ligase [ADP-forming] subunit beta (388 aa).

Residues 9–244 (KAIFRSMGVA…LEEEDPKEIE (236 aa)) enclose the ATP-grasp domain. ATP contacts are provided by residues K46, 53–55 (GRG), E99, C102, and E107. Mg(2+) is bound by residues N199 and D213. Substrate is bound by residues N264 and 321–323 (GIM).

Belongs to the succinate/malate CoA ligase beta subunit family. Heterotetramer of two alpha and two beta subunits. Requires Mg(2+) as cofactor.

It carries out the reaction succinate + ATP + CoA = succinyl-CoA + ADP + phosphate. The enzyme catalyses GTP + succinate + CoA = succinyl-CoA + GDP + phosphate. The protein operates within carbohydrate metabolism; tricarboxylic acid cycle; succinate from succinyl-CoA (ligase route): step 1/1. Functionally, succinyl-CoA synthetase functions in the citric acid cycle (TCA), coupling the hydrolysis of succinyl-CoA to the synthesis of either ATP or GTP and thus represents the only step of substrate-level phosphorylation in the TCA. The beta subunit provides nucleotide specificity of the enzyme and binds the substrate succinate, while the binding sites for coenzyme A and phosphate are found in the alpha subunit. The chain is Succinate--CoA ligase [ADP-forming] subunit beta from Staphylococcus saprophyticus subsp. saprophyticus (strain ATCC 15305 / DSM 20229 / NCIMB 8711 / NCTC 7292 / S-41).